We begin with the raw amino-acid sequence, 106 residues long: Ribonuclease P protein component 4 (106 aa).

Zn(2+)-binding residues include Cys57, Cys60, Cys83, and Cys86.

This sequence belongs to the eukaryotic/archaeal RNase P protein component 4 family. In terms of assembly, consists of a catalytic RNA component and at least 4-5 protein subunits. The cofactor is Zn(2+).

The protein resides in the cytoplasm. The catalysed reaction is Endonucleolytic cleavage of RNA, removing 5'-extranucleotides from tRNA precursor.. Functionally, part of ribonuclease P, a protein complex that generates mature tRNA molecules by cleaving their 5'-ends. This chain is Ribonuclease P protein component 4, found in Saccharolobus solfataricus (strain ATCC 35092 / DSM 1617 / JCM 11322 / P2) (Sulfolobus solfataricus).